The primary structure comprises 89 residues: uncharacterized protein (89 aa).

This is an uncharacterized protein from Borreliella burgdorferi (strain ATCC 35210 / DSM 4680 / CIP 102532 / B31) (Borrelia burgdorferi).